Reading from the N-terminus, the 335-residue chain is Partner of xrn-2 protein 1 (335 aa).

The 85-residue stretch at 7 to 91 folds into the XRN2-binding (XTBD) domain; it reads VEAEKKLWES…SYVKASAAKK (85 aa). Residues 95-119 are disordered; the sequence is VKTSDLEGASDESKKVKMEKSPSPV. Over residues 105–114 the composition is skewed to basic and acidic residues; sequence DESKKVKMEK.

As to quaternary structure, interacts (via N-terminus) with xrn-2; the interaction is direct.

The protein resides in the nucleus. It is found in the nucleolus. The protein localises to the nucleoplasm. Plays a role in maintenance of steady-state concentration and turnover of microRNAs (miRNA) by degradation of mature miRNA in complex with the exoribonuclease xrn-2. Stabilizes and enhances the accumulation and activity of the exoribonuclease xrn-2, and thus contributes to miRNA turnover. This Caenorhabditis elegans protein is Partner of xrn-2 protein 1.